Here is a 490-residue protein sequence, read N- to C-terminus: GTPase Der (490 aa).

EngA-type G domains follow at residues 3–166 and 200–373; these read PVVA…AEAM and IKLA…DSAT. GTP contacts are provided by residues 9–16, 56–60, 118–121, 206–213, 253–257, and 318–321; these read GRPNVGKS, DTGGI, NKVD, GKPNVGKS, DTAGV, and NKWD. The 85-residue stretch at 374 to 458 folds into the KH-like domain; it reads RRVSTSMLTR…PIQIRFQDGG (85 aa).

The protein belongs to the TRAFAC class TrmE-Era-EngA-EngB-Septin-like GTPase superfamily. EngA (Der) GTPase family. As to quaternary structure, associates with the 50S ribosomal subunit.

Its function is as follows. GTPase that plays an essential role in the late steps of ribosome biogenesis. The protein is GTPase Der of Shewanella piezotolerans (strain WP3 / JCM 13877).